The primary structure comprises 141 residues: Decarboxylase CPUR_05434 (141 aa).

One can recognise an EthD domain in the interval 26–121 (EGMSEEAYRN…MHDHEMFADT (96 aa)).

This sequence belongs to the tpcK family.

It catalyses the reaction atrochrysone carboxylate + H(+) = atrochrysone + CO2. Its function is as follows. Decarboxylase; part of the ergochrome gene cluster responsible for the typical purple-black color of the ergot sclerotia. The ergochrome gene cluster produces several ergot pigments including the yellow ergochrome secalonic acid and its derivatives, as well as the red anthraquinones endocrocin and clavorubin. The pathway begins with the synthesis of atrochrysone thioester by the polyketide synthase (PKS) CPUR_05437. The atrochrysone carboxyl ACP thioesterase CPUR_05436 then breaks the thioester bond and releases the atrochrysone carboxylic acid from CPUR_05437. The decarboxylase CPUR_05434 then catalyzes the concerted decarboxylation-elimination required to convert atochrysone carboxylic acid into emodin anthrone, which is further oxidized to emodin by the anthrone oxygenase CPUR_05435. Emodin is further modified to yield monodictyphenone via several steps involving CPUR_05427, CPUR_05428, CPUR_05429 and CPUR_05430. The short chain dehydrogenase/reductase CPUR_05418 then catalyzes the C-5 ketoreduction to give the xanthone skeleton of the monomeric units. Ergochromes formation requires further dimerization steps of different xanthone units, probably catalyzed by the cytochrome P450 monooxygenase CPUR_05419. CPUR_05425, CPUR_05426 and CPUR_05431 are unique to Claviceps, thus it is likely that they are involved in further modification of xanthone units or in their dimerization. The yellow ergochromes and the red anthraquinone pigments endocrocin and clavorubin are products from the same PKS derived precursors and the latter are likely shunt products in the pathway of xanthone biosynthesis. It is proposed that atrochrysone carboxylic acid released from the PKS CPUR_05437 can also be converted to endocrocin anthrone which is further oxidized into endocrocin by CPUR_05435. Endocrocin could be then modified to clavorubin, possibly by CPUR_05423 and CPUR_05431. Clavorubin is the principal anthraquinone metabolite produced by the cluster with a much higher yield compared to endocrocin. The protein is Decarboxylase CPUR_05434 of Claviceps purpurea (strain 20.1) (Ergot fungus).